The sequence spans 90 residues: Small ribosomal subunit protein bS20 (90 aa).

Over residues 1 to 10 (MANHKSTQKS) the composition is skewed to polar residues. Residues 1–25 (MANHKSTQKSIRQDQKRNLINKSRK) are disordered.

It belongs to the bacterial ribosomal protein bS20 family.

Binds directly to 16S ribosomal RNA. In Orientia tsutsugamushi (strain Ikeda) (Rickettsia tsutsugamushi), this protein is Small ribosomal subunit protein bS20.